A 163-amino-acid chain; its full sequence is Transcription antitermination protein NusB (163 aa).

Belongs to the NusB family.

Involved in transcription antitermination. Required for transcription of ribosomal RNA (rRNA) genes. Binds specifically to the boxA antiterminator sequence of the ribosomal RNA (rrn) operons. In Granulibacter bethesdensis (strain ATCC BAA-1260 / CGDNIH1), this protein is Transcription antitermination protein NusB.